The sequence spans 233 residues: Apoptosis regulator Bcl-2 (233 aa).

The BH4 signature appears at 10–30 (DNREIVLKYIHYKLSQRGYDW). Residues 32-86 (AGEDRPPVPPAPAPAAAPAAVAAAGASSHHRPEPPGSAAASEVPPAEGLRPAPPG) are disordered. The BH3 motif lies at 87–101 (VHLALRQAGDEFSRR). Positions 130-149 (ELFRDGVNWGRIVAFFEFGG) match the BH1 motif. The BH2 motif lies at 181-196 (NWIQDNGGWDAFVELY). Residues 208–228 (WISLKTILSLVLVGACITLGA) traverse the membrane as a helical segment.

The protein belongs to the Bcl-2 family. In terms of assembly, forms homodimers, and heterodimers with BAX, BAD, BAK and Bcl-X(L). Heterodimerization with BAX requires intact BH1 and BH2 motifs, and is necessary for anti-apoptotic activity. Also interacts with APAF1 and RAF-1. As to expression, in adult chicken expressed, in thymus, spleen, kidney, heart, ovary and brain, with the highest levels in the thymus. In the embryo, highly levels expressed in all tissues with high levels in the bursa of Fabricius.

Its subcellular location is the mitochondrion outer membrane. It localises to the nucleus membrane. It is found in the endoplasmic reticulum membrane. The protein resides in the cytoplasm. Its function is as follows. Suppresses apoptosis in a variety of cell systems including factor-dependent lymphohematopoietic and neural cells. Regulates cell death by controlling the mitochondrial membrane permeability. Appears to function in a feedback loop system with caspases. Inhibits caspase activity either by preventing the release of cytochrome c from the mitochondria and/or by binding to the apoptosis-activating factor (APAF-1). In Gallus gallus (Chicken), this protein is Apoptosis regulator Bcl-2 (BCL2).